The primary structure comprises 123 residues: Protein Rev (123 aa).

2 positions are modified to phosphoserine; by host CK2: S5 and S8. Residues I18 to N26 are homomultimerization. 2 disordered regions span residues Q24–Q49 and T82–N123. A Nuclear localization signal and RNA-binding (RRE) motif is present at residues S34–R50. Basic residues predominate over residues Q36 to Q49. A Nuclear export signal and binding to XPO1 motif is present at residues L73 to D84. Residues P97–G112 show a composition bias toward polar residues.

It belongs to the HIV-1 REV protein family. In terms of assembly, homomultimer; when bound to the RRE. Multimeric assembly is essential for activity and may involve XPO1. Binds to human KPNB1, XPO1, TNPO1, RANBP5 and IPO7. Interacts with the viral Integrase. Interacts with human KHDRBS1. Interacts with human NAP1; this interaction decreases Rev multimerization and stimulates its activity. Interacts with human DEAD-box helicases DDX3 and DDX24; these interactions may serve for viral RNA export to the cytoplasm and packaging, respectively. Interacts with human PSIP1; this interaction may inhibit HIV-1 DNA integration by promoting dissociation of the Integrase-LEDGF/p75 complex. Asymmetrically arginine dimethylated at one site by host PRMT6. Methylation impairs the RNA-binding activity and export of viral RNA from the nucleus to the cytoplasm. Post-translationally, phosphorylated by protein kinase CK2. Presence of, and maybe binding to the N-terminus of the regulatory beta subunit of CK2 is necessary for CK2-mediated Rev's phosphorylation.

It is found in the host nucleus. The protein resides in the host nucleolus. The protein localises to the host cytoplasm. Functionally, escorts unspliced or incompletely spliced viral pre-mRNAs (late transcripts) out of the nucleus of infected cells. These pre-mRNAs carry a recognition sequence called Rev responsive element (RRE) located in the env gene, that is not present in fully spliced viral mRNAs (early transcripts). This function is essential since most viral proteins are translated from unspliced or partially spliced pre-mRNAs which cannot exit the nucleus by the pathway used by fully processed cellular mRNAs. Rev itself is translated from a fully spliced mRNA that readily exits the nucleus. Rev's nuclear localization signal (NLS) binds directly to KPNB1/Importin beta-1 without previous binding to KPNA1/Importin alpha-1. KPNB1 binds to the GDP bound form of RAN (Ran-GDP) and targets Rev to the nucleus. In the nucleus, the conversion from Ran-GDP to Ran-GTP dissociates Rev from KPNB1 and allows Rev's binding to the RRE in viral pre-mRNAs. Rev multimerization on the RRE via cooperative assembly exposes its nuclear export signal (NES) to the surface. Rev can then form a complex with XPO1/CRM1 and Ran-GTP, leading to nuclear export of the complex. Conversion from Ran-GTP to Ran-GDP mediates dissociation of the Rev/RRE/XPO1/RAN complex, so that Rev can return to the nucleus for a subsequent round of export. Beside KPNB1, also seems to interact with TNPO1/Transportin-1, RANBP5/IPO5 and IPO7/RANBP7 for nuclear import. The nucleoporin-like HRB/RIP is an essential cofactor that probably indirectly interacts with Rev to release HIV RNAs from the perinuclear region to the cytoplasm. This is Protein Rev from Simian immunodeficiency virus (isolate MB66) (SIV-cpz).